A 290-amino-acid polypeptide reads, in one-letter code: Protein-lysine methyltransferase METTL21E (290 aa).

S-adenosyl-L-methionine-binding positions include tryptophan 96, 124 to 126, aspartate 145, tryptophan 176, and alanine 197; that span reads GAG.

Belongs to the methyltransferase superfamily. METTL21 family.

In terms of biological role, protein-lysine methyltransferase. This chain is Protein-lysine methyltransferase METTL21E (METTL21E), found in Bos taurus (Bovine).